A 397-amino-acid polypeptide reads, in one-letter code: UDP-GlcNAc:betaGal beta-1,3-N-acetylglucosaminyltransferase 8 (397 aa).

Over 1–6 the chain is Cytoplasmic; that stretch reads MRCPKC. The helical; Signal-anchor for type II membrane protein transmembrane segment at 7-23 threads the bilayer; the sequence is LLCLSALLTLLGLKVYI. Residues 24-397 lie on the Lumenal side of the membrane; sequence EWTSESRLSK…KQLQDPRLQC (374 aa). A disordered region spans residues 33-58; that stretch reads KAYPSPRGTPPSPTPANPEPTLPANL. The span at 39 to 53 shows a compositional bias: pro residues; the sequence is RGTPPSPTPANPEPT. The N-linked (GlcNAc...) asparagine glycan is linked to asparagine 57.

It belongs to the glycosyltransferase 31 family. In terms of assembly, interacts with B3GNT2; this interaction greatly increases B3GNT2 catalytic activity, independently of B3GNT8 enzymatic activity. As to expression, highly expressed in small intestine, pancreas, spleen, bone marrow, lung, throat, and ileum, and weakly in fetal brain, cerebellum, heart, liver, tongue, breast, uteri, and testis. Not detected in colon. Differentially expressed in human tumor cell lines.

The protein localises to the golgi apparatus membrane. It functions in the pathway protein modification; protein glycosylation. Functionally, beta-1,3-N-acetylglucosaminyltransferase that plays a role in the elongation of specific branch structures of multiantennary N-glycans. Has strong activity towards tetraantennary N-glycans and 2,6 triantennary glycans. This chain is UDP-GlcNAc:betaGal beta-1,3-N-acetylglucosaminyltransferase 8, found in Homo sapiens (Human).